The following is a 389-amino-acid chain: Large envelope protein (389 aa).

M1 carries the N-acetylmethionine modification. G2 is lipidated: N-myristoyl glycine; by host. A pre-S1 region spans residues 2–108 (GQNLSTSNPL…PPLRNTHPQA (107 aa)). A pre-S region spans residues 2-163 (GQNLSTSNPL…FSRIGDPALN (162 aa)). The Virion surface; in external conformation segment spans residues 2-170 (GQNLSTSNPL…ALNMENITSG (169 aa)). Residues 2–242 (GQNLSTSNPL…PGYRWMCLRR (241 aa)) lie on the Intravirion; in internal conformation side of the membrane. The segment at 77–101 (LPANPPPASTNRQTGRQPTPLSPPL) is disordered. Over residues 85–95 (STNRQTGRQPT) the composition is skewed to polar residues. Residues 109 to 163 (MQWNSTTFHQTLQDPRVRGLYFPAGGSSSGTVNPVPTTASPISSIFSRIGDPALN) are pre-S2. The chain crosses the membrane as a helical span at residues 171–191 (LLGPLLVLQAGFFLLTRILTI). Topologically, residues 192-242 (PQSLDSWWTSLNFLGGTTVCLGQNSQSPTSNHSPTSCPPTCPGYRWMCLRR) are intravirion; in external conformation. Residues 243 to 263 (FIIFLFILLLCLIFLLVLLDY) traverse the membrane as a helical segment. The Virion surface segment spans residues 264–337 (QGMLPVCPLI…WASARFSWLS (74 aa)). Residue N309 is glycosylated (N-linked (GlcNAc...) asparagine; by host). Residues 338–358 (LLVPFVQWFVGLSPTVWLSVI) form a helical membrane-spanning segment. At 359–364 (WMMWYW) the chain is on the intravirion side. A helical membrane pass occupies residues 365-387 (GPSLYRILSPFLPLLPIFFCLWV). Residues 388–389 (YI) are Virion surface-facing.

This sequence belongs to the orthohepadnavirus major surface antigen family. As to quaternary structure, in its internal form (Li-HBsAg), interacts with the capsid protein and with the isoform S. Interacts with host chaperone CANX. In terms of assembly, associates with host chaperone CANX through its pre-S2 N glycan; this association may be essential for isoform M proper secretion. Interacts with isoform L. Interacts with the antigens of satellite virus HDV (HDVAgs); this interaction is required for encapsidation of HDV genomic RNA. In terms of processing, isoform M is N-terminally acetylated by host at a ratio of 90%, and N-glycosylated by host at the pre-S2 region. Post-translationally, myristoylated.

The protein resides in the virion membrane. The large envelope protein exists in two topological conformations, one which is termed 'external' or Le-HBsAg and the other 'internal' or Li-HBsAg. In its external conformation the protein attaches the virus to cell receptors and thereby initiating infection. This interaction determines the species specificity and liver tropism. This attachment induces virion internalization predominantly through caveolin-mediated endocytosis. The large envelope protein also assures fusion between virion membrane and endosomal membrane. In its internal conformation the protein plays a role in virion morphogenesis and mediates the contact with the nucleocapsid like a matrix protein. Functionally, the middle envelope protein plays an important role in the budding of the virion. It is involved in the induction of budding in a nucleocapsid independent way. In this process the majority of envelope proteins bud to form subviral lipoprotein particles of 22 nm of diameter that do not contain a nucleocapsid. The sequence is that of Large envelope protein from Hepatitis B virus genotype D (isolate Germany/1-91/1991) (HBV-D).